The following is a 648-amino-acid chain: Serine/threonine-protein kinase plk-1 (648 aa).

Residues 1–24 are disordered; that stretch reads MNRLPNIAKPPQKSNQRKEKAPPE. The 252-residue stretch at 38 to 289 folds into the Protein kinase domain; sequence YEKGRFLGKG…AKQVQRDGFF (252 aa). ATP is bound by residues 44–52 and Lys-67; that span reads LGKGGFAHC. Asp-161 functions as the Proton acceptor in the catalytic mechanism. 2 POLO box domains span residues 412–492 and 514–596; these read WISK…YMND and TLRV…RLMS. Residues 612–629 are compositionally biased toward low complexity; that stretch reads PRSMAAARSASAGSRGPN.

This sequence belongs to the protein kinase superfamily. Ser/Thr protein kinase family. CDC5/Polo subfamily. In terms of assembly, interacts with mex-5, mex-6 and spat-1. Embryos.

The protein resides in the cytoplasm. It localises to the cytoskeleton. It is found in the microtubule organizing center. The protein localises to the centrosome. Its subcellular location is the midbody. The protein resides in the nucleus. It localises to the chromosome. It is found in the centromere. The protein localises to the kinetochore. The enzyme catalyses L-seryl-[protein] + ATP = O-phospho-L-seryl-[protein] + ADP + H(+). It carries out the reaction L-threonyl-[protein] + ATP = O-phospho-L-threonyl-[protein] + ADP + H(+). Its function is as follows. Required for oocyte nuclear envelope breakdown before entry of oocyte into spermatheca. In meiotic cells, required for spindle dynamics and probably for spindle attachment to the chromosomes. Zygotic role in the development of the germline and nerve cord. In mitotic cells, plays a role in spindle organization and centrosome maturation. Involved in asymmetric nuclear localization of cdc-25.1 during embryogenesis which affects cell division timing. Together with plk-2, regulates cytoplasm polarity in early embryos. May play a minor role in chromosome pairing and synapsis during oocyte meiosis I. This is Serine/threonine-protein kinase plk-1 (plk-1) from Caenorhabditis elegans.